Here is a 447-residue protein sequence, read N- to C-terminus: Tubulin beta-2 chain (447 aa).

Residues Gln9, Glu67, Ser136, Gly140, Thr141, Gly142, Asn202, and Asn224 each contribute to the GTP site. Residue Glu67 participates in Mg(2+) binding. The segment covering 411 to 425 has biased composition (polar residues); that stretch reads SNMNDLVSEYQQYQD. Residues 411–447 are disordered; sequence SNMNDLVSEYQQYQDATAEEDEYEEEEEDYHQEHDEM. The span at 427-440 shows a compositional bias: acidic residues; sequence TAEEDEYEEEEEDY.

Belongs to the tubulin family. Dimer of alpha and beta chains. A typical microtubule is a hollow water-filled tube with an outer diameter of 25 nm and an inner diameter of 15 nM. Alpha-beta heterodimers associate head-to-tail to form protofilaments running lengthwise along the microtubule wall with the beta-tubulin subunit facing the microtubule plus end conferring a structural polarity. Microtubules usually have 13 protofilaments but different protofilament numbers can be found in some organisms and specialized cells. Mg(2+) serves as cofactor.

It is found in the cytoplasm. It localises to the cytoskeleton. In terms of biological role, tubulin is the major constituent of microtubules, a cylinder consisting of laterally associated linear protofilaments composed of alpha- and beta-tubulin heterodimers. Microtubules grow by the addition of GTP-tubulin dimers to the microtubule end, where a stabilizing cap forms. Below the cap, tubulin dimers are in GDP-bound state, owing to GTPase activity of alpha-tubulin. This is Tubulin beta-2 chain (TUBB2) from Pisum sativum (Garden pea).